Here is a 902-residue protein sequence, read N- to C-terminus: 4-hydroxyphenylacetate decarboxylase glycyl radical subunit (902 aa).

The PFL domain occupies Lys38 to Leu774. 4-hydroxyphenylacetate is bound by residues Ser348 and Cys507. Catalysis depends on Cys507, which acts as the Cysteine radical intermediate. Catalysis depends on Glu509, which acts as the Proton donor. 2 residues coordinate 4-hydroxyphenylacetate: His540 and Glu641. Residues Gly782–Val902 enclose the Glycine radical domain. Gly877 is modified (glycine radical).

Belongs to the glycyl radical enzyme (GRE) family. HPAD subfamily. As to quaternary structure, heterooctamer consisting of 4 large (HpdB) subunits and 4 small (HpdC) subunits, arranged as a tetramer of heterodimers. Also forms a catalytically inactive homodimer. In terms of processing, requires the activating protein CsdA to generate the key active site glycyl radical that is involved in catalysis. Post-translationally, phosphorylated on serine. Phosphorylation may trigger the formation of the active heterooctamers and thereby regulates enzyme activity.

It catalyses the reaction 4-hydroxyphenylacetate + H(+) = 4-methylphenol + CO2. The enzyme catalyses 3,4-dihydroxyphenylacetate + H(+) = 4-methylcatechol + CO2. Functionally, glycyl radical subunit of the HPA decarboxylase that decarboxylates phenylacetates with a hydroxyl group in the p-position. Active toward 4-hydroxyphenylacetate and 3,4-dihydroxyphenylacetate, forming 4-methylphenol and 4-methylcatechol, respectively. Is likely involved in the catabolism of aromatic amino acids such as tyrosine fermentation. 4-methylphenol (p-cresol) formation provides metabolic toxicity, which allows an active suppression of other microbes and may provide growth advantages for the producers in highly competitive environments. The large subunit is the catalytic subunit that binds the substrate. The chain is 4-hydroxyphenylacetate decarboxylase glycyl radical subunit from Clostridioides difficile (strain CD196) (Peptoclostridium difficile).